The primary structure comprises 200 residues: Large ribosomal subunit protein uL4 (200 aa).

The tract at residues T42–G65 is disordered.

This sequence belongs to the universal ribosomal protein uL4 family. As to quaternary structure, part of the 50S ribosomal subunit.

Its function is as follows. One of the primary rRNA binding proteins, this protein initially binds near the 5'-end of the 23S rRNA. It is important during the early stages of 50S assembly. It makes multiple contacts with different domains of the 23S rRNA in the assembled 50S subunit and ribosome. Functionally, forms part of the polypeptide exit tunnel. This Acinetobacter baumannii (strain AB307-0294) protein is Large ribosomal subunit protein uL4.